The following is an 827-amino-acid chain: Rho GTPase-activating protein 6 (827 aa).

One can recognise a PH domain in the interval 18–125 (TVYKSGPLFI…WKAALEQALA (108 aa)). The region spanning 172 to 371 (LALEEIDGSP…ALLEDYGNMI (200 aa)) is the Rho-GAP domain. Disordered regions lie at residues 379–437 (CSTS…SDYA) and 517–561 (YTTS…SSGN). Residues 401–412 (IVVKHPDLHTLD) are compositionally biased toward basic and acidic residues. Positions 413–423 (IEEGETDDDND) are enriched in acidic residues. The segment covering 517–543 (YTTSAEKPASKTTGSSTVNSKRSSSWG) has biased composition (polar residues). A coiled-coil region spans residues 560–684 (GNDELLIQRL…HQLSQQRQHH (125 aa)).

Acts as a GTPase activator for the Rac-type GTPase by converting it to an inactive GDP-bound state. The chain is Rho GTPase-activating protein 6 (ROPGAP6) from Arabidopsis thaliana (Mouse-ear cress).